Here is a 186-residue protein sequence, read N- to C-terminus: Pyridoxal 5'-phosphate synthase subunit PdxT (186 aa).

Glycine 46 to serine 48 provides a ligand contact to L-glutamine. The active-site Nucleophile is cysteine 78. Residues arginine 105 and isoleucine 134–arginine 135 each bind L-glutamine. Active-site charge relay system residues include histidine 170 and glutamate 172.

The protein belongs to the glutaminase PdxT/SNO family. In terms of assembly, in the presence of PdxS, forms a dodecamer of heterodimers. Only shows activity in the heterodimer.

It carries out the reaction aldehydo-D-ribose 5-phosphate + D-glyceraldehyde 3-phosphate + L-glutamine = pyridoxal 5'-phosphate + L-glutamate + phosphate + 3 H2O + H(+). The catalysed reaction is L-glutamine + H2O = L-glutamate + NH4(+). Its pathway is cofactor biosynthesis; pyridoxal 5'-phosphate biosynthesis. Catalyzes the hydrolysis of glutamine to glutamate and ammonia as part of the biosynthesis of pyridoxal 5'-phosphate. The resulting ammonia molecule is channeled to the active site of PdxS. The sequence is that of Pyridoxal 5'-phosphate synthase subunit PdxT from Clostridium acetobutylicum (strain ATCC 824 / DSM 792 / JCM 1419 / IAM 19013 / LMG 5710 / NBRC 13948 / NRRL B-527 / VKM B-1787 / 2291 / W).